Reading from the N-terminus, the 222-residue chain is Leucyl/phenylalanyl-tRNA--protein transferase (222 aa).

Belongs to the L/F-transferase family.

The protein localises to the cytoplasm. The enzyme catalyses N-terminal L-lysyl-[protein] + L-leucyl-tRNA(Leu) = N-terminal L-leucyl-L-lysyl-[protein] + tRNA(Leu) + H(+). It catalyses the reaction N-terminal L-arginyl-[protein] + L-leucyl-tRNA(Leu) = N-terminal L-leucyl-L-arginyl-[protein] + tRNA(Leu) + H(+). The catalysed reaction is L-phenylalanyl-tRNA(Phe) + an N-terminal L-alpha-aminoacyl-[protein] = an N-terminal L-phenylalanyl-L-alpha-aminoacyl-[protein] + tRNA(Phe). Its function is as follows. Functions in the N-end rule pathway of protein degradation where it conjugates Leu, Phe and, less efficiently, Met from aminoacyl-tRNAs to the N-termini of proteins containing an N-terminal arginine or lysine. This Legionella pneumophila (strain Paris) protein is Leucyl/phenylalanyl-tRNA--protein transferase.